The chain runs to 97 residues: Mapk-regulated corepressor-interacting protein 1 (97 aa).

The segment at 1–29 (MTSSPVSRVVYNGKRNSSPRSPTNSSEIF) is disordered. The segment covering 15-26 (RNSSPRSPTNSS) has biased composition (low complexity). Position 21 is a phosphoserine (serine 21). Threonine 30 carries the post-translational modification Phosphothreonine. Tyrosine 41 carries the phosphotyrosine modification. An N6-acetyllysine modification is found at lysine 79. Residues 80–84 (PIDLS) carry the PXDLS motif motif.

This sequence belongs to the MCRIP family. As to quaternary structure, interacts (unphosphorylated form, via the PXDLS motif) with CTBP1, competitively inhibiting CTBP-ZEB1 interaction. Interacts with CTBP2. Interacts with MCRIP2. Interacts with DDX6. Post-translationally, phosphorylation by MAPK3/1 (ERK1/2) regulates MCRIP1 binding to CTBP(s). In terms of tissue distribution, widely expressed (at protein level).

It is found in the nucleus. The protein resides in the cytoplasm. Its subcellular location is the stress granule. In terms of biological role, the phosphorylation status of MCRIP1 functions as a molecular switch to regulate epithelial-mesenchymal transition. Unphosphorylated MCRIP1 binds to and inhibits the transcriptional corepressor CTBP(s). When phosphorylated by MAPK/ERK, MCRIP1 releases CTBP(s) resulting in transcriptional silencing of the E-cadherin gene and induction of epithelial-mesenchymal transition. The protein is Mapk-regulated corepressor-interacting protein 1 (Mcrip1) of Mus musculus (Mouse).